The chain runs to 430 residues: 3-phosphoshikimate 1-carboxyvinyltransferase (430 aa).

Positions 21, 22, and 26 each coordinate 3-phosphoshikimate. Phosphoenolpyruvate is bound at residue Lys21. 2 residues coordinate phosphoenolpyruvate: Gly92 and Arg120. Residues Ser165, Ser166, Gln167, Ser193, Asp314, and Lys341 each coordinate 3-phosphoshikimate. Gln167 serves as a coordination point for phosphoenolpyruvate. Asp314 (proton acceptor) is an active-site residue. Positions 345, 386, and 411 each coordinate phosphoenolpyruvate.

It belongs to the EPSP synthase family. Monomer.

The protein localises to the cytoplasm. The catalysed reaction is 3-phosphoshikimate + phosphoenolpyruvate = 5-O-(1-carboxyvinyl)-3-phosphoshikimate + phosphate. The protein operates within metabolic intermediate biosynthesis; chorismate biosynthesis. In terms of biological role, catalyzes the transfer of the enolpyruvyl moiety of phosphoenolpyruvate (PEP) to the 5-hydroxyl of shikimate-3-phosphate (S3P) to produce enolpyruvyl shikimate-3-phosphate and inorganic phosphate. This Methanospirillum hungatei JF-1 (strain ATCC 27890 / DSM 864 / NBRC 100397 / JF-1) protein is 3-phosphoshikimate 1-carboxyvinyltransferase.